A 372-amino-acid polypeptide reads, in one-letter code: Aminomethyltransferase (372 aa).

This sequence belongs to the GcvT family. As to quaternary structure, the glycine cleavage system is composed of four proteins: P, T, L and H.

The enzyme catalyses N(6)-[(R)-S(8)-aminomethyldihydrolipoyl]-L-lysyl-[protein] + (6S)-5,6,7,8-tetrahydrofolate = N(6)-[(R)-dihydrolipoyl]-L-lysyl-[protein] + (6R)-5,10-methylene-5,6,7,8-tetrahydrofolate + NH4(+). The glycine cleavage system catalyzes the degradation of glycine. The polypeptide is Aminomethyltransferase (Streptomyces coelicolor (strain ATCC BAA-471 / A3(2) / M145)).